We begin with the raw amino-acid sequence, 306 residues long: tRNA dimethylallyltransferase (306 aa).

6–13 is a binding site for ATP; the sequence is GPTASGKS. 8-13 lines the substrate pocket; the sequence is TASGKS.

This sequence belongs to the IPP transferase family. Monomer. Mg(2+) is required as a cofactor.

The catalysed reaction is adenosine(37) in tRNA + dimethylallyl diphosphate = N(6)-dimethylallyladenosine(37) in tRNA + diphosphate. Catalyzes the transfer of a dimethylallyl group onto the adenine at position 37 in tRNAs that read codons beginning with uridine, leading to the formation of N6-(dimethylallyl)adenosine (i(6)A). In Sphingopyxis alaskensis (strain DSM 13593 / LMG 18877 / RB2256) (Sphingomonas alaskensis), this protein is tRNA dimethylallyltransferase.